The primary structure comprises 324 residues: S-methyl-5'-thioadenosine phosphorylase (324 aa).

Phosphate-binding positions include Ser-14, 57-58 (RH), and 90-91 (SA). A substrate-binding site is contributed by Met-196. Position 197 (Ser-197) interacts with phosphate. 220-222 (DYD) contributes to the substrate binding site.

This sequence belongs to the PNP/MTAP phosphorylase family. MTAP subfamily. As to quaternary structure, homotrimer.

The protein resides in the cytoplasm. The protein localises to the nucleus. It catalyses the reaction S-methyl-5'-thioadenosine + phosphate = 5-(methylsulfanyl)-alpha-D-ribose 1-phosphate + adenine. The protein operates within amino-acid biosynthesis; L-methionine biosynthesis via salvage pathway; S-methyl-5-thio-alpha-D-ribose 1-phosphate from S-methyl-5'-thioadenosine (phosphorylase route): step 1/1. Functionally, catalyzes the reversible phosphorylation of S-methyl-5'-thioadenosine (MTA) to adenine and 5-methylthioribose-1-phosphate. Involved in the breakdown of MTA, a major by-product of polyamine biosynthesis. Responsible for the first step in the methionine salvage pathway after MTA has been generated from S-adenosylmethionine. Has broad substrate specificity with 6-aminopurine nucleosides as preferred substrates. The chain is S-methyl-5'-thioadenosine phosphorylase from Coprinopsis cinerea (strain Okayama-7 / 130 / ATCC MYA-4618 / FGSC 9003) (Inky cap fungus).